The following is a 510-amino-acid chain: MLRRALLCLALTALFRAGAGAPDEEDHVLVLHKGNFDEALAAHKYLLVEFYAPWCGHCKALAPEYAKAAGKLKAEGSEIRLAKVDATEESDLAQQYGVRGYPTIKFFKNGDTASPKEYTAGREADDIVNWLKKRTGPAASTLSDGAAAEALVESSEVAVIGFFKDMESDSAKQFFLAAEVIDDIPFGITSNSDVFSKYQLDKDGVVLFKKFDEGRNNFEGEVTKEKLLDFIKHNQLPLVIEFTEQTAPKIFGGEIKTHILLFLPKSVSDYEGKLSNFKKAAESFKGKILFIFIDSDHTDNQRILEFFGLKKEECPAVRLITLEEEMTKYKPESDELTAEKITEFCHRFLEGKIKPHLMSQELPDDWDKQPVKVLVGKNFEEVAFDEKKNVFVEFYAPWCGHCKQLAPIWDKLGETYKDHENIVIAKMDSTANEVEAVKVHSFPTLKFFPASADRTVIDYNGERTLDGFKKFLESGGQDGAGDDDDLEDLEEAEEPDLEEDDDQKAVKDEL.

Positions 1–20 (MLRRALLCLALTALFRAGAG) are cleaved as a signal peptide. Positions 27 to 136 (HVLVLHKGNF…IVNWLKKRTG (110 aa)) constitute a Thioredoxin 1 domain. Residues Cys-55 and Cys-58 each act as nucleophile in the active site. Cys-55 and Cys-58 are joined by a disulfide. Lys-202 carries the post-translational modification N6-acetyllysine. An N6-succinyllysine mark is found at Lys-224 and Lys-273. Phosphoserine occurs at positions 333 and 359. In terms of domain architecture, Thioredoxin 2 spans 351–477 (GKIKPHLMSQ…FKKFLESGGQ (127 aa)). Catalysis depends on nucleophile residues Cys-399 and Cys-402. Cys-399 and Cys-402 form a disulfide bridge. Ser-429 carries the post-translational modification Phosphoserine. The disordered stretch occupies residues 473 to 510 (ESGGQDGAGDDDDLEDLEEAEEPDLEEDDDQKAVKDEL). Residues 480 to 502 (AGDDDDLEDLEEAEEPDLEEDDD) are compositionally biased toward acidic residues. Residues 507-510 (KDEL) carry the Prevents secretion from ER motif.

It belongs to the protein disulfide isomerase family. Heterodimer; heterodimerizes with the protein microsomal triglyceride transfer MTTP. Homodimer. Monomers and homotetramers may also occur. Interacts with P4HA2, forming a heterotetramer consisting of 2 alpha subunits (P4HA2) and 2 beta (P4HB), where P4HB plays the role of a structural subunit; this tetramer catalyzes the formation of 4-hydroxyproline in collagen. Also constitutes the structural subunit of the microsomal triacylglycerol transfer protein MTTP in mammalian cells. Stabilizes both enzymes and retain them in the ER without contributing to the catalytic activity. Binds UBQLN1. Interacts with ERO1B. Interacts with ILDR2. Interacts with ERN1/IRE1A (via N-terminus); the interaction is enhanced by phosphorylation of P4HB by FAM20C in response to endoplasmic reticulum stress and results in attenuation of ERN1 activity. Post-translationally, phosphorylation of Ser-359 by FAM20C is induced by endoplasmic reticulum stress and results in a functional switch from oxidoreductase to molecular chaperone. It also promotes interaction with ERN1.

The protein localises to the endoplasmic reticulum. It localises to the endoplasmic reticulum lumen. The protein resides in the melanosome. Its subcellular location is the cell membrane. The catalysed reaction is Catalyzes the rearrangement of -S-S- bonds in proteins.. In terms of biological role, this multifunctional protein catalyzes the formation, breakage and rearrangement of disulfide bonds. At the cell surface, seems to act as a reductase that cleaves disulfide bonds of proteins attached to the cell. May therefore cause structural modifications of exofacial proteins. Inside the cell, seems to form/rearrange disulfide bonds of nascent proteins. At high concentrations and following phosphorylation by FAM20C, functions as a chaperone that inhibits aggregation of misfolded proteins. At low concentrations, facilitates aggregation (anti-chaperone activity). May be involved with other chaperones in the structural modification of the TG precursor in hormone biogenesis. Also acts as a structural subunit of various enzymes such as prolyl 4-hydroxylase and microsomal triacylglycerol transfer protein MTTP. Receptor for LGALS9; the interaction retains P4HB at the cell surface of Th2 T helper cells, increasing disulfide reductase activity at the plasma membrane, altering the plasma membrane redox state and enhancing cell migration. The protein is Protein disulfide-isomerase (P4HB) of Bos taurus (Bovine).